We begin with the raw amino-acid sequence, 313 residues long: uncharacterized protein (313 aa).

The next 3 helical transmembrane spans lie at 19-41 (GLAVAIALITAIAWFPDGLAGFL), 51-68 (AIIGAILTILGLSIIFFL), and 81-103 (IAEFGFIVLTLIFSLIVFNDFAI).

It is found in the cell membrane. This is an uncharacterized protein from Aquifex aeolicus (strain VF5).